The primary structure comprises 81 residues: Large ribosomal subunit protein bL28 (81 aa).

It belongs to the bacterial ribosomal protein bL28 family. As to quaternary structure, part of the 50S ribosomal subunit.

This Deinococcus radiodurans (strain ATCC 13939 / DSM 20539 / JCM 16871 / CCUG 27074 / LMG 4051 / NBRC 15346 / NCIMB 9279 / VKM B-1422 / R1) protein is Large ribosomal subunit protein bL28.